Consider the following 92-residue polypeptide: Small ribosomal subunit protein uS19 (92 aa).

The protein belongs to the universal ribosomal protein uS19 family.

Its function is as follows. Protein S19 forms a complex with S13 that binds strongly to the 16S ribosomal RNA. The sequence is that of Small ribosomal subunit protein uS19 from Beijerinckia indica subsp. indica (strain ATCC 9039 / DSM 1715 / NCIMB 8712).